Reading from the N-terminus, the 200-residue chain is Proteasome subunit beta 2 (200 aa).

Residues 1–10 (MSDQLELMTG) constitute a propeptide, removed in mature form; by autocatalysis. Thr-11 functions as the Nucleophile in the catalytic mechanism.

This sequence belongs to the peptidase T1B family. In terms of assembly, the 20S proteasome core is composed of 14 alpha and 14 beta subunits that assemble into four stacked heptameric rings, resulting in a barrel-shaped structure. The two inner rings, each composed of seven catalytic beta subunits, are sandwiched by two outer rings, each composed of seven alpha subunits. The catalytic chamber with the active sites is on the inside of the barrel. Has a gated structure, the ends of the cylinder being occluded by the N-termini of the alpha-subunits. Is capped at one or both ends by the proteasome regulatory ATPase, PAN.

The protein resides in the cytoplasm. The enzyme catalyses Cleavage of peptide bonds with very broad specificity.. With respect to regulation, the formation of the proteasomal ATPase PAN-20S proteasome complex, via the docking of the C-termini of PAN into the intersubunit pockets in the alpha-rings, triggers opening of the gate for substrate entry. Interconversion between the open-gate and close-gate conformations leads to a dynamic regulation of the 20S proteasome proteolysis activity. Functionally, component of the proteasome core, a large protease complex with broad specificity involved in protein degradation. In Caldivirga maquilingensis (strain ATCC 700844 / DSM 13496 / JCM 10307 / IC-167), this protein is Proteasome subunit beta 2.